A 56-amino-acid chain; its full sequence is Large ribosomal subunit protein bL33 (56 aa).

Residues 1-12 show a composition bias toward basic and acidic residues; sequence MASKGGRDKIKL. A disordered region spans residues 1 to 28; the sequence is MASKGGRDKIKLESTAGTGHFYTTTKNK. The span at 15–25 shows a compositional bias: polar residues; it reads TAGTGHFYTTT.

This sequence belongs to the bacterial ribosomal protein bL33 family.

The chain is Large ribosomal subunit protein bL33 from Cupriavidus necator (strain ATCC 17699 / DSM 428 / KCTC 22496 / NCIMB 10442 / H16 / Stanier 337) (Ralstonia eutropha).